The sequence spans 279 residues: Octanoyl-[GcvH]:protein N-octanoyltransferase (279 aa).

Positions 48 to 253 (ETSPPVIRLW…TLEKLSDEIV (206 aa)) constitute a BPL/LPL catalytic domain. Cys152 serves as the catalytic Acyl-thioester intermediate.

Belongs to the octanoyltransferase LipL family.

It catalyses the reaction N(6)-octanoyl-L-lysyl-[glycine-cleavage complex H protein] + L-lysyl-[lipoyl-carrier protein] = N(6)-octanoyl-L-lysyl-[lipoyl-carrier protein] + L-lysyl-[glycine-cleavage complex H protein]. It participates in protein modification; protein lipoylation via endogenous pathway; protein N(6)-(lipoyl)lysine from octanoyl-[acyl-carrier-protein]. Catalyzes the amidotransfer (transamidation) of the octanoyl moiety from octanoyl-GcvH to the lipoyl domain of the E2 subunit of lipoate-dependent enzymes. This is Octanoyl-[GcvH]:protein N-octanoyltransferase from Oceanobacillus iheyensis (strain DSM 14371 / CIP 107618 / JCM 11309 / KCTC 3954 / HTE831).